Reading from the N-terminus, the 160-residue chain is Major pollen allergen Bet v 1-M/N (160 aa).

Brassinolide is bound by residues K55, Y82, Y84, and N101.

Belongs to the BetVI family.

The protein resides in the cytoplasm. Functionally, may be a general steroid carrier protein. The protein is Major pollen allergen Bet v 1-M/N (BETV1M) of Betula pendula (European white birch).